A 127-amino-acid polypeptide reads, in one-letter code: uncharacterized protein (127 aa).

The first 23 residues, 1–23, serve as a signal peptide directing secretion; that stretch reads MSKPLKFLLWSSLALLLLQIGSG.

This is an uncharacterized protein from Arabidopsis thaliana (Mouse-ear cress).